The chain runs to 754 residues: 5-methyltetrahydropteroyltriglutamate--homocysteine methyltransferase (754 aa).

5-methyltetrahydropteroyltri-L-glutamate is bound by residues 17 to 20 (RELK) and Lys117. L-homocysteine-binding positions include 431–433 (IGS) and Glu484. L-methionine contacts are provided by residues 431–433 (IGS) and Glu484. 5-methyltetrahydropteroyltri-L-glutamate is bound by residues 515–516 (RC) and Trp561. An L-homocysteine-binding site is contributed by Asp599. Residue Asp599 coordinates L-methionine. Residue Glu605 coordinates 5-methyltetrahydropteroyltri-L-glutamate. The Zn(2+) site is built by His641, Cys643, and Glu665. The active-site Proton donor is His694. Position 726 (Cys726) interacts with Zn(2+).

Belongs to the vitamin-B12 independent methionine synthase family. Zn(2+) serves as cofactor.

It carries out the reaction 5-methyltetrahydropteroyltri-L-glutamate + L-homocysteine = tetrahydropteroyltri-L-glutamate + L-methionine. The protein operates within amino-acid biosynthesis; L-methionine biosynthesis via de novo pathway; L-methionine from L-homocysteine (MetE route): step 1/1. Its function is as follows. Catalyzes the transfer of a methyl group from 5-methyltetrahydrofolate to homocysteine resulting in methionine formation. In Klebsiella pneumoniae subsp. pneumoniae (strain ATCC 700721 / MGH 78578), this protein is 5-methyltetrahydropteroyltriglutamate--homocysteine methyltransferase.